A 1337-amino-acid chain; its full sequence is Activated Cdc42 kinase-like (1337 aa).

A Phosphoserine modification is found at serine 71. Residues 133-399 (ISVNKQLGTG…GEIYDQLPDM (267 aa)) enclose the Protein kinase domain. Residues 139–147 (LGTGEFGIV) and lysine 164 each bind ATP. Aspartate 260 serves as the catalytic Proton acceptor. A phosphotyrosine mark is found at tyrosine 291 and tyrosine 292. Residues 399 to 460 (MKPEQLKAVV…NPSNTVAFLE (62 aa)) enclose the SH3 domain. In terms of domain architecture, CRIB spans 488-502 (ISKPQNDFKHTGHVG). Residues 714–739 (SGDTNGNKHGHGLLPTLSKKKSSGTV) are disordered. Serine 764 and serine 778 each carry phosphoserine. The disordered stretch occupies residues 786-822 (RFPHLSNNGSGDKSGGLGTSGSAHTPTHGNASPFPKK). Residues 805–815 (SGSAHTPTHGN) are compositionally biased toward polar residues. 3 positions are modified to phosphoserine: serine 831, serine 918, and serine 924. 2 disordered regions span residues 906–969 (AGLS…TSTK) and 1024–1045 (PSGM…PTVG). Over residues 947 to 957 (PESPNPIPLPP) the composition is skewed to pro residues.

Belongs to the protein kinase superfamily. Tyr protein kinase family.

It catalyses the reaction L-tyrosyl-[protein] + ATP = O-phospho-L-tyrosyl-[protein] + ADP + H(+). Its function is as follows. Likely to act as a downstream effector of Cdc42 during dorsal closure, acting in a kinase independent manner with the other ACK family member Ack to positively regulate expression of the myosin zip by promoting the endocytosis of Egfr in the amnioserosa (AS). This is Activated Cdc42 kinase-like from Drosophila melanogaster (Fruit fly).